We begin with the raw amino-acid sequence, 265 residues long: Methylthioribulose-1-phosphate dehydratase (265 aa).

Position 118 (cysteine 118) interacts with substrate. Residues histidine 136 and histidine 138 each contribute to the Zn(2+) site. Glutamate 161 serves as the catalytic Proton donor/acceptor. Residue histidine 226 participates in Zn(2+) binding.

Belongs to the aldolase class II family. MtnB subfamily. Requires Zn(2+) as cofactor.

Its subcellular location is the cytoplasm. It catalyses the reaction 5-(methylsulfanyl)-D-ribulose 1-phosphate = 5-methylsulfanyl-2,3-dioxopentyl phosphate + H2O. It functions in the pathway amino-acid biosynthesis; L-methionine biosynthesis via salvage pathway; L-methionine from S-methyl-5-thio-alpha-D-ribose 1-phosphate: step 2/6. Functionally, catalyzes the dehydration of methylthioribulose-1-phosphate (MTRu-1-P) into 2,3-diketo-5-methylthiopentyl-1-phosphate (DK-MTP-1-P). In Scheffersomyces stipitis (strain ATCC 58785 / CBS 6054 / NBRC 10063 / NRRL Y-11545) (Yeast), this protein is Methylthioribulose-1-phosphate dehydratase.